The following is a 491-amino-acid chain: Xaa-Pro aminopeptidase 1 (491 aa).

Positions 1-32 are disordered; sequence MAEELTPENPAIPETPEETEEPIKQRKNGLYP. Mn(2+)-binding residues include Asp-308, Asp-320, His-403, Glu-434, and Glu-458.

It belongs to the peptidase M24B family. In terms of assembly, homodimer. The cofactor is Mn(2+).

It carries out the reaction Release of any N-terminal amino acid, including proline, that is linked to proline, even from a dipeptide or tripeptide.. The chain is Xaa-Pro aminopeptidase 1 (pepPI) from Streptomyces coelicolor (strain ATCC BAA-471 / A3(2) / M145).